We begin with the raw amino-acid sequence, 139 residues long: Ribulose bisphosphate carboxylase small subunit (139 aa).

The protein belongs to the RuBisCO small chain family. In terms of assembly, heterohexadecamer of 8 large and 8 small subunits.

The protein resides in the plastid. Its subcellular location is the chloroplast. Functionally, ruBisCO catalyzes two reactions: the carboxylation of D-ribulose 1,5-bisphosphate, the primary event in carbon dioxide fixation, as well as the oxidative fragmentation of the pentose substrate in the photorespiration process. Both reactions occur simultaneously and in competition at the same active site. Although the small subunit is not catalytic it is essential for maximal activity. The protein is Ribulose bisphosphate carboxylase small subunit of Ectocarpus siliculosus (Brown alga).